Reading from the N-terminus, the 115-residue chain is Large ribosomal subunit protein bL20c (115 aa).

It belongs to the bacterial ribosomal protein bL20 family.

The protein resides in the plastid. It localises to the chloroplast. Its function is as follows. Binds directly to 23S ribosomal RNA and is necessary for the in vitro assembly process of the 50S ribosomal subunit. It is not involved in the protein synthesizing functions of that subunit. The polypeptide is Large ribosomal subunit protein bL20c (Pyropia yezoensis (Susabi-nori)).